A 146-amino-acid polypeptide reads, in one-letter code: uncharacterized protein (146 aa).

The N-acetyltransferase domain occupies 1 to 120; sequence MTDKFDANDE…TILKWEKNMD (120 aa).

Belongs to the acetyltransferase family.

This is an uncharacterized protein from Streptococcus pyogenes serotype M6 (strain ATCC BAA-946 / MGAS10394).